The following is a 70-amino-acid chain: Large ribosomal subunit protein bL32 (70 aa).

Positions 1–19 (MAVPKKKTSPSRRGMRRSH) are enriched in basic residues. The tract at residues 1-21 (MAVPKKKTSPSRRGMRRSHQA) is disordered.

Belongs to the bacterial ribosomal protein bL32 family.

The sequence is that of Large ribosomal subunit protein bL32 from Granulibacter bethesdensis (strain ATCC BAA-1260 / CGDNIH1).